The sequence spans 784 residues: DNA repair and recombination protein RAD54-like (784 aa).

A disordered region spans residues 1–54 (MRRSLAPSQRGPMRPESRHSFTPPLLKKNKRSCQQELEREQELDRKRQSALRDA). A required for chromatin remodeling, strand pairing activities and coupling of ATPase activity region spans residues 2–9 (RRSLAPSQ). Ser20 carries the phosphoserine modification. Thr22 is subject to Phosphothreonine. Over residues 36 to 47 (ELEREQELDRKR) the composition is skewed to basic and acidic residues. The region spanning 172–346 (EGKRGNFNGC…YSLVNFVNPE (175 aa)) is the Helicase ATP-binding domain. 185–192 (DEMGLGKT) contacts ATP. The short motif at 297-300 (DEGH) is the DEGH box element. A Helicase C-terminal domain is found at 503–660 (LLDFMLAAIR…NNESAEKHFT (158 aa)). The disordered stretch occupies residues 751-784 (EEAASEQPEEKPDRRKRPSTPPSDDSADEDFLGF). Positions 775 to 784 (DSADEDFLGF) are enriched in acidic residues.

It belongs to the SNF2/RAD54 helicase family. In terms of assembly, interacts (via N-terminus) with spn-A/Rad51.

The protein resides in the nucleus. Functionally, involved in mitotic DNA repair and meiotic recombination. Functions in the recombinational DNA repair pathway. Essential for interhomolog gene conversion (GC), but may have a less important role in intersister GC than spn-A/Rad51. In the presence of DNA, spn-A/Rad51 enhances the ATPase activity of okr/Rad54. This is DNA repair and recombination protein RAD54-like from Drosophila yakuba (Fruit fly).